The sequence spans 397 residues: Acetate kinase 2 (397 aa).

Mg(2+) is bound at residue asparagine 10. Lysine 17 is an ATP binding site. Arginine 90 serves as a coordination point for substrate. Aspartate 147 acts as the Proton donor/acceptor in catalysis. Residues 207-211 (HLGNG), 281-283 (DAR), and 329-333 (GIGEN) each bind ATP. Mg(2+) is bound at residue glutamate 385.

This sequence belongs to the acetokinase family. Homodimer. Mg(2+) serves as cofactor. Requires Mn(2+) as cofactor.

The protein localises to the cytoplasm. It catalyses the reaction acetate + ATP = acetyl phosphate + ADP. It functions in the pathway metabolic intermediate biosynthesis; acetyl-CoA biosynthesis; acetyl-CoA from acetate: step 1/2. In terms of biological role, catalyzes the formation of acetyl phosphate from acetate and ATP. Can also catalyze the reverse reaction. The polypeptide is Acetate kinase 2 (Vibrio vulnificus (strain CMCP6)).